The chain runs to 238 residues: Lactate utilization protein A (238 aa).

It belongs to the LutA/YkgE family.

Functionally, is involved in L-lactate degradation and allows cells to grow with lactate as the sole carbon source. The sequence is that of Lactate utilization protein A from Geobacillus sp. (strain WCH70).